Here is a 253-residue protein sequence, read N- to C-terminus: Eukaryotic initiation factor 4A-6 (253 aa).

Positions 1-82 constitute a Helicase ATP-binding domain; it reads HVVVGTPGRV…RKFMNKPVRI (82 aa). A DEAD box motif is present at residues 30–33; the sequence is DEAD. The Helicase C-terminal domain occupies 93 to 253; it reads GIKQFYVNVD…EELPANVADL (161 aa).

This sequence belongs to the DEAD box helicase family. eIF4A subfamily. In terms of assembly, eIF4F is a multi-subunit complex, the composition of which varies with external and internal environmental conditions. It is composed of at least EIF4A, EIF4E and EIF4G.

The catalysed reaction is ATP + H2O = ADP + phosphate + H(+). ATP-dependent RNA helicase which is a subunit of the eIF4F complex involved in cap recognition and is required for mRNA binding to ribosome. In the current model of translation initiation, eIF4A unwinds RNA secondary structures in the 5'-UTR of mRNAs which is necessary to allow efficient binding of the small ribosomal subunit, and subsequent scanning for the initiator codon. The polypeptide is Eukaryotic initiation factor 4A-6 (Nicotiana tabacum (Common tobacco)).